A 324-amino-acid polypeptide reads, in one-letter code: HTH-type transcriptional regulator GlxA (324 aa).

Positions 223-321 (LAVLEKMETA…SQTPGSLRRR (99 aa)) constitute an HTH araC/xylS-type domain. 2 consecutive DNA-binding regions (H-T-H motif) follow at residues 240–261 (TAMA…REHR) and 288–311 (IPEI…KRLF).

In Rhizobium meliloti (strain 1021) (Ensifer meliloti), this protein is HTH-type transcriptional regulator GlxA (glxA).